A 297-amino-acid chain; its full sequence is Bifunctional protein FolD 1 (297 aa).

Residues 164–166 (GRS) and T230 contribute to the NADP(+) site.

The protein belongs to the tetrahydrofolate dehydrogenase/cyclohydrolase family. Homodimer.

It catalyses the reaction (6R)-5,10-methylene-5,6,7,8-tetrahydrofolate + NADP(+) = (6R)-5,10-methenyltetrahydrofolate + NADPH. It carries out the reaction (6R)-5,10-methenyltetrahydrofolate + H2O = (6R)-10-formyltetrahydrofolate + H(+). Its pathway is one-carbon metabolism; tetrahydrofolate interconversion. In terms of biological role, catalyzes the oxidation of 5,10-methylenetetrahydrofolate to 5,10-methenyltetrahydrofolate and then the hydrolysis of 5,10-methenyltetrahydrofolate to 10-formyltetrahydrofolate. This Rhodococcus jostii (strain RHA1) protein is Bifunctional protein FolD 1.